We begin with the raw amino-acid sequence, 633 residues long: Probable potassium transport system protein Kup (633 aa).

The next 12 helical transmembrane spans lie at 21-41 (LAVGSVGVVYGDIGTSPLYAF), 61-81 (LVSLMFWALTIIVTMKYVLFL), 107-127 (TAVLMLLGLLGAALFLGDAMI), 145-165 (PTLSDYIVPISVAILALLFAI), 176-196 (FFGPITAIWFIVMGLAGIMHI), 219-239 (GFLGVVVLGAVFLTVTGAEAL), 255-275 (WFVLVFPSLTLNYLGQGALVL), 293-313 (ALLPVVILATMATIIASQAVI), 345-365 (IFLPSVNAILFFGVIFLVLSF), 371-391 (LATAYGISVTGAMVVTSIMAF), 402-422 (LPMAIAVLTPLLLLEFVFLGA), and 427-447 (IHDGGYVPVLIATAFTVIMWT).

This sequence belongs to the HAK/KUP transporter (TC 2.A.72) family.

It is found in the cell inner membrane. It catalyses the reaction K(+)(in) + H(+)(in) = K(+)(out) + H(+)(out). Transport of potassium into the cell. Likely operates as a K(+):H(+) symporter. The sequence is that of Probable potassium transport system protein Kup from Rhizobium rhizogenes (strain K84 / ATCC BAA-868) (Agrobacterium radiobacter).